Reading from the N-terminus, the 1149-residue chain is Bone sialoprotein-binding protein (1149 aa).

An N-terminal signal peptide occupies residues 1 to 52 (MINRDNKKAITKKGMISNRLNKFSIRKYTVGTASILVGTTLIFGLGNQEAKA). The interval 53–601 (AENTSTENAK…GDGTVKPEEK (549 aa)) is ligand binding A region. Disordered stretches follow at residues 54 to 249 (ENTS…TAPT) and 675 to 697 (LPTK…VTVK). Over residues 61–75 (AKQDEASASDNKEVV) the composition is skewed to basic and acidic residues. Positions 77-89 (ETENNSTQKNDLT) are enriched in polar residues. Residues 92-106 (IKKETNTDSHQEAKE) show a composition bias toward basic and acidic residues. The span at 109–126 (TTSSTQQQQNNATTSTET) shows a compositional bias: low complexity. Over residues 130–145 (NIEKENVKPSTDKTAT) the composition is skewed to basic and acidic residues. Residues 158 to 205 (PNNTNNDVTTKPSTSEIQTTPTTPQESTNIENSQPQPTPSKVDNQVTD) are compositionally biased toward polar residues. A compositionally biased stretch (basic and acidic residues) spans 216–241 (SKEELKNNPEKLKELVRNDSNTDRST). CNA-B domains follow at residues 602–714 (LYKI…YKEP), 715–824 (KYNL…YKTP), and 825–935 (KYSL…EEDT). Positions 896-1124 (TQTGTNTTED…TGSENNGSNN (229 aa)) are disordered. Composition is skewed to acidic residues over residues 903-913 (TEDDKDADGGE) and 930-1088 (YFEE…DSDS). The LPXTG sorting signal signature appears at 1112 to 1116 (LPETG). At Thr1115 the chain carries Pentaglycyl murein peptidoglycan amidated threonine. A propeptide spans 1116–1149 (GSENNGSNNATLFGGLFAALGSLLLFGRRKKQNK) (removed by sortase).

Belongs to the serine-aspartate repeat-containing protein (SDr) family.

Its subcellular location is the secreted. It localises to the cell wall. Its function is as follows. Specifically interacts with bone sialoprotein (BSP), a glycoprotein of bone and dentin extracellular matrix. Could contribute to staphylococcal osteomyelitis and arthritis. In Staphylococcus aureus, this protein is Bone sialoprotein-binding protein (bbp).